We begin with the raw amino-acid sequence, 621 residues long: Chaperone protein HscA homolog (621 aa).

This sequence belongs to the heat shock protein 70 family.

Its function is as follows. Chaperone involved in the maturation of iron-sulfur cluster-containing proteins. Has a low intrinsic ATPase activity which is markedly stimulated by HscB. This chain is Chaperone protein HscA homolog, found in Cupriavidus pinatubonensis (strain JMP 134 / LMG 1197) (Cupriavidus necator (strain JMP 134)).